Here is a 72-residue protein sequence, read N- to C-terminus: Translation initiation factor IF-1 (72 aa).

Residues 1–72 (MAKEETIQMQ…TRARITFRTK (72 aa)) enclose the S1-like domain.

This sequence belongs to the IF-1 family. Component of the 30S ribosomal translation pre-initiation complex which assembles on the 30S ribosome in the order IF-2 and IF-3, IF-1 and N-formylmethionyl-tRNA(fMet); mRNA recruitment can occur at any time during PIC assembly.

It localises to the cytoplasm. Functionally, one of the essential components for the initiation of protein synthesis. Stabilizes the binding of IF-2 and IF-3 on the 30S subunit to which N-formylmethionyl-tRNA(fMet) subsequently binds. Helps modulate mRNA selection, yielding the 30S pre-initiation complex (PIC). Upon addition of the 50S ribosomal subunit IF-1, IF-2 and IF-3 are released leaving the mature 70S translation initiation complex. This Nitrosomonas eutropha (strain DSM 101675 / C91 / Nm57) protein is Translation initiation factor IF-1.